A 234-amino-acid polypeptide reads, in one-letter code: Opacity protein V28 (234 aa).

A signal peptide is located at residue alanine 1.

This sequence belongs to the opacity porin family.

The protein localises to the cell outer membrane. Implicated in a number of adherence functions. OPA proteins are implicated in pathogenesis and are subject to phase variation. The polypeptide is Opacity protein V28 (Neisseria gonorrhoeae).